Consider the following 352-residue polypeptide: CMP-sialic acid transporter 4 (352 aa).

Residues 1 to 51 lie on the Cytoplasmic side of the membrane; it reads MEYRKIKDEDDHDVASDIESVKGKSHTVASSNIAMATLGVGSSERINWKRK. Residues 52-72 traverse the membrane as a helical segment; sequence GVVTCALTILTSSQAILIVWS. Residues 73 to 81 are Lumenal-facing; the sequence is KRAGKYEYS. Residues 82-102 form a helical membrane-spanning segment; it reads VTTANFLVGTLKCALSLLALT. The Cytoplasmic portion of the chain corresponds to 103 to 124; that stretch reads RIWKNEGVTDDNRLSTTFDEVK. A helical membrane pass occupies residues 125 to 145; sequence VFPIPAALYLFKNLLQYYIFA. At 146–174 the chain is on the lumenal side; it reads YVDAPGYQILKNLNIISTGVLYRIILKRK. The helical transmembrane segment at 175-195 threads the bilayer; the sequence is LSEIQWAGFILLCCGCTTAQL. Over 196–210 the chain is Cytoplasmic; it reads NSNSDRVLQTSLPGW. Residues 211 to 231 traverse the membrane as a helical segment; the sequence is TMAIVMALLSGFAGVYTEAII. The Lumenal segment spans residues 232-238; the sequence is KKRPSRN. The helical transmembrane segment at 239–259 threads the bilayer; that stretch reads INVQNFWLYVFGMAFNAVAIV. Residues 260 to 276 lie on the Cytoplasmic side of the membrane; that stretch reads IQDFDAVANKGFFHGYS. The helical transmembrane segment at 277-297 threads the bilayer; sequence FITLLMILNHALSGIAVSMVM. At 298 to 313 the chain is on the lumenal side; the sequence is KYADNIVKVYSTSVAM. Residues 314-334 form a helical membrane-spanning segment; the sequence is LLTAVVSVFLFNFHLSLAFFL. At 335 to 352 the chain is on the cytoplasmic side; that stretch reads GSTVVSVSVYLHSAGKLR.

It belongs to the nucleotide-sugar transporter family. CMP-Sialate:CMP antiporter (TC 2.A.7.12) subfamily.

The protein resides in the golgi apparatus membrane. Functionally, sugar transporter involved in the transport of CMP-sialic acid from the cytoplasm into the Golgi. Essential protein. The sequence is that of CMP-sialic acid transporter 4 from Arabidopsis thaliana (Mouse-ear cress).